A 429-amino-acid chain; its full sequence is L-threonine dehydratase biosynthetic IlvA (429 aa).

K66 carries the N6-(pyridoxal phosphate)lysine modification. Pyridoxal 5'-phosphate-binding positions include N93, 196–200 (GGGGC), and S322. The region spanning 346–420 (HYFLVDFPQE…TDIHVEALEP (75 aa)) is the ACT-like domain.

The protein belongs to the serine/threonine dehydratase family. In terms of assembly, homotetramer. Requires pyridoxal 5'-phosphate as cofactor.

The enzyme catalyses L-threonine = 2-oxobutanoate + NH4(+). It functions in the pathway amino-acid biosynthesis; L-isoleucine biosynthesis; 2-oxobutanoate from L-threonine: step 1/1. Its function is as follows. Catalyzes the anaerobic formation of alpha-ketobutyrate and ammonia from threonine in a two-step reaction. The first step involved a dehydration of threonine and a production of enamine intermediates (aminocrotonate), which tautomerizes to its imine form (iminobutyrate). Both intermediates are unstable and short-lived. The second step is the nonenzymatic hydrolysis of the enamine/imine intermediates to form 2-ketobutyrate and free ammonia. In the low water environment of the cell, the second step is accelerated by RidA. The sequence is that of L-threonine dehydratase biosynthetic IlvA (ilvA) from Mycobacterium bovis (strain ATCC BAA-935 / AF2122/97).